The chain runs to 728 residues: Protein Hook homolog 1 (728 aa).

M1 is modified (N-acetylmethionine). The interval 1-555 (MEDPQPLPQS…LKQKLEAHME (555 aa)) is sufficient for interaction with microtubules. The Calponin-homology (CH) domain maps to 12-128 (LPLCDSLIIW…RLLQLILGCA (117 aa)). Coiled coils occupy residues 168–443 (PASD…LNQA) and 477–658 (LRLQ…AKLR). S235 is subject to Phosphoserine. Positions 481–510 (QEGTENERIEQLQEQLEQKHRKMNELETEQ) are disordered. Positions 657-728 (LRDYEEKLIV…SVKVPAAASD (72 aa)) are sufficient for interaction with AKTIP and VPS18. Residues S719 and S727 each carry the phosphoserine modification.

It belongs to the hook family. Self-associates. Component of the FTS/Hook/FHIP complex (FHF complex), composed of AKTIP/FTS, FHIP1B, and one or more members of the Hook family of proteins HOOK1, HOOK2, and HOOK3. Interacts directly with AKTIP/FTS, HOOK2 and HOOK3. Associates with several subunits of the homotypic vesicular sorting complex (the HOPS complex) including VPS16, VPS18, VPS39 and VPS41; these interactions may be indirect. Interacts with CCDC181. Interacts (via coiled-coil region) with RIMBP3 (via C-terminus). Interacts with LRGUK (via guanylate kinase-like domain). Interacts with microtubules. May interacts with CLN3. Interacts with AP4M1; the interaction is direct, mediates the interaction between FTS-Hook-FHIP (FHF) complex and AP-4 and the perinuclear distribution of AP-4. Mainly expressed in testis.

The protein localises to the cytoplasm. It is found in the cytoskeleton. In terms of biological role, component of the FTS/Hook/FHIP complex (FHF complex). The FHF complex may function to promote vesicle trafficking and/or fusion via the homotypic vesicular protein sorting complex (the HOPS complex). FHF complex promotes the distribution of AP-4 complex to the perinuclear area of the cell. Required for spermatid differentiation. Probably involved in the positioning of the microtubules of the manchette and the flagellum in relation to the membrane skeleton. In Mus musculus (Mouse), this protein is Protein Hook homolog 1 (Hook1).